Here is a 556-residue protein sequence, read N- to C-terminus: 2-succinyl-5-enolpyruvyl-6-hydroxy-3-cyclohexene-1-carboxylate synthase (556 aa).

This sequence belongs to the TPP enzyme family. MenD subfamily. As to quaternary structure, homodimer. The cofactor is Mg(2+). Mn(2+) is required as a cofactor. It depends on thiamine diphosphate as a cofactor.

The catalysed reaction is isochorismate + 2-oxoglutarate + H(+) = 5-enolpyruvoyl-6-hydroxy-2-succinyl-cyclohex-3-ene-1-carboxylate + CO2. Its pathway is quinol/quinone metabolism; 1,4-dihydroxy-2-naphthoate biosynthesis; 1,4-dihydroxy-2-naphthoate from chorismate: step 2/7. It participates in quinol/quinone metabolism; menaquinone biosynthesis. Catalyzes the thiamine diphosphate-dependent decarboxylation of 2-oxoglutarate and the subsequent addition of the resulting succinic semialdehyde-thiamine pyrophosphate anion to isochorismate to yield 2-succinyl-5-enolpyruvyl-6-hydroxy-3-cyclohexene-1-carboxylate (SEPHCHC). This Escherichia coli O127:H6 (strain E2348/69 / EPEC) protein is 2-succinyl-5-enolpyruvyl-6-hydroxy-3-cyclohexene-1-carboxylate synthase.